The chain runs to 292 residues: Elongation factor Ts (292 aa).

Residues 82–85 (TDFV) form an involved in Mg(2+) ion dislocation from EF-Tu region.

The protein belongs to the EF-Ts family.

Its subcellular location is the cytoplasm. Associates with the EF-Tu.GDP complex and induces the exchange of GDP to GTP. It remains bound to the aminoacyl-tRNA.EF-Tu.GTP complex up to the GTP hydrolysis stage on the ribosome. The sequence is that of Elongation factor Ts from Legionella pneumophila (strain Paris).